Consider the following 354-residue polypeptide: NADH-quinone oxidoreductase subunit H (354 aa).

The next 8 membrane-spanning stretches (helical) occupy residues 25–45 (LVRI…LILW), 91–111 (WIYM…WAVI), 126–146 (LLYA…AGWA), 170–190 (MGFA…SGIV), 205–225 (FLSW…ISGI), 267–287 (IVIS…PFGF), 290–310 (FIPG…VFIW), and 330–350 (IFIP…MSPL).

This sequence belongs to the complex I subunit 1 family. NDH-1 is composed of 14 different subunits. Subunits NuoA, H, J, K, L, M, N constitute the membrane sector of the complex.

It localises to the cell inner membrane. It catalyses the reaction a quinone + NADH + 5 H(+)(in) = a quinol + NAD(+) + 4 H(+)(out). NDH-1 shuttles electrons from NADH, via FMN and iron-sulfur (Fe-S) centers, to quinones in the respiratory chain. The immediate electron acceptor for the enzyme in this species is believed to be ubiquinone. Couples the redox reaction to proton translocation (for every two electrons transferred, four hydrogen ions are translocated across the cytoplasmic membrane), and thus conserves the redox energy in a proton gradient. This subunit may bind ubiquinone. This Paraburkholderia xenovorans (strain LB400) protein is NADH-quinone oxidoreductase subunit H.